A 1860-amino-acid chain; its full sequence is Probable helicase with zinc finger domain (1860 aa).

A C3H1-type zinc finger spans residues 168–196; the sequence is SEEYTLCKRFLEQGLCRYGAQCTSAHSQE. 661–668 contacts ATP; sequence GPYGTGKT. The DEAA box signature appears at 787-790; the sequence is DEAA. Disordered regions lie at residues 1106 to 1136, 1158 to 1177, 1286 to 1317, 1556 to 1604, 1641 to 1709, and 1749 to 1860; these read RSQH…TEPF, TPPG…VQRL, ERKA…GFPA, IQPR…PPDH, RQDP…RYPS, and MSEE…TYFK. A compositionally biased stretch (low complexity) spans 1107–1116; that stretch reads SQHPPQQGPG. The span at 1286–1298 shows a compositional bias: basic and acidic residues; the sequence is ERKAPELKEKQGD. Positions 1301 to 1313 are enriched in polar residues; it reads SVQNKSPEPQSNM. Residues 1641-1660 show a composition bias toward low complexity; it reads RQDPGPLQHQQQKQQLQAPQ. Composition is skewed to pro residues over residues 1760–1769 and 1783–1794; these read QPPPPPPPHP and PLLPSKQTPPDP. The span at 1847 to 1860 shows a compositional bias: low complexity; it reads GSSNSSNGYYTYFK.

This sequence belongs to the DNA2/NAM7 helicase family.

Its subcellular location is the nucleus. Its function is as follows. May act as a helicase. This chain is Probable helicase with zinc finger domain (helz), found in Danio rerio (Zebrafish).